The sequence spans 419 residues: Mitogen-activated protein kinase pmk-2 (419 aa).

One can recognise a Protein kinase domain in the interval Y49–L350. ATP is bound by residues L55–V63 and K78. The Proton acceptor role is filled by D210. The residue at position 222 (T222) is a Phosphothreonine. Residues T222 to Y224 carry the TXY motif. Y224 carries the post-translational modification Phosphotyrosine.

The protein belongs to the protein kinase superfamily. CMGC Ser/Thr protein kinase family. MAP kinase subfamily. Mg(2+) is required as a cofactor. In terms of processing, dually phosphorylated on Thr-222 and Tyr-224, which activates the enzyme.

It is found in the cytoplasm. The catalysed reaction is L-seryl-[protein] + ATP = O-phospho-L-seryl-[protein] + ADP + H(+). It catalyses the reaction L-threonyl-[protein] + ATP = O-phospho-L-threonyl-[protein] + ADP + H(+). Its activity is regulated as follows. Activated by phosphorylation on threonine and tyrosine. Inhibited by pyridinyl-imidazole related compounds. Functionally, responds to activation by environmental stress and pro-inflammatory cytokines by phosphorylating downstream targets. This chain is Mitogen-activated protein kinase pmk-2 (pmk-2), found in Caenorhabditis elegans.